The chain runs to 197 residues: uncharacterized protein (197 aa).

The helical transmembrane segment at 7–27 (PISVGQMVLICIFILIILFVI) threads the bilayer.

It belongs to the IIV-6 307L family.

The protein localises to the membrane. This is an uncharacterized protein from Acheta domesticus (House cricket).